A 374-amino-acid polypeptide reads, in one-letter code: Putative zinc finger MYND domain-containing protein R331 (374 aa).

8 residues coordinate Zn(2+): C328, C331, C341, C344, C350, C354, H362, and C366. The MYND-type zinc finger occupies C328–C366.

The sequence is that of Putative zinc finger MYND domain-containing protein R331 from Acanthamoeba polyphaga (Amoeba).